A 535-amino-acid chain; its full sequence is Arylsulfatase K (535 aa).

Residues 1 to 21 form the signal peptide; sequence MGSGGPLLLLRGLLLVGAAYC. The Ca(2+) site is built by Asp41 and Cys81. The active-site Nucleophile is the Cys81. Cys81 bears the 3-oxoalanine (Cys) mark. Lys129 serves as a coordination point for substrate. Asn194 carries an N-linked (GlcNAc...) asparagine glycan. His252 provides a ligand contact to substrate. An N-linked (GlcNAc...) asparagine glycan is attached at Asn263. Positions 314 and 315 each coordinate Ca(2+). 3 N-linked (GlcNAc...) asparagine glycosylation sites follow: Asn376, Asn414, and Asn499.

The protein belongs to the sulfatase family. Requires Ca(2+) as cofactor. In terms of processing, the conversion to 3-oxoalanine (also known as C-formylglycine, FGly), of a serine or cysteine residue in prokaryotes and of a cysteine residue in eukaryotes, is critical for catalytic activity.

The protein resides in the secreted. It is found in the lysosome. The enzyme catalyses an aryl sulfate + H2O = a phenol + sulfate + H(+). It catalyses the reaction Hydrolysis of the 2-sulfate groups of the 2-O-sulfo-D-glucuronate residues of chondroitin sulfate, heparin and heparitin sulfate.. Its function is as follows. Catalyzes the hydrolysis of pseudosubstrates such as p-nitrocatechol sulfate and p-nitrophenyl sulfate. Catalyzes the hydrolysis of the 2-sulfate groups of the 2-O-sulfo-D-glucuronate residues of chondroitin sulfate, heparin and heparitin sulfate. Acts selectively on 2-sulfoglucuronate and lacks activity against 2-sulfoiduronate. This is Arylsulfatase K (ARSK) from Gallus gallus (Chicken).